We begin with the raw amino-acid sequence, 281 residues long: 3-methyl-2-oxobutanoate hydroxymethyltransferase (281 aa).

Mg(2+) is bound by residues aspartate 49 and aspartate 88. 3-methyl-2-oxobutanoate-binding positions include 49–50, aspartate 88, and lysine 118; that span reads DS. Glutamate 120 is a Mg(2+) binding site. The active-site Proton acceptor is glutamate 186.

The protein belongs to the PanB family. In terms of assembly, homodecamer; pentamer of dimers. The cofactor is Mg(2+).

Its subcellular location is the cytoplasm. The catalysed reaction is 3-methyl-2-oxobutanoate + (6R)-5,10-methylene-5,6,7,8-tetrahydrofolate + H2O = 2-dehydropantoate + (6S)-5,6,7,8-tetrahydrofolate. Its pathway is cofactor biosynthesis; (R)-pantothenate biosynthesis; (R)-pantoate from 3-methyl-2-oxobutanoate: step 1/2. In terms of biological role, catalyzes the reversible reaction in which hydroxymethyl group from 5,10-methylenetetrahydrofolate is transferred onto alpha-ketoisovalerate to form ketopantoate. In Chelativorans sp. (strain BNC1), this protein is 3-methyl-2-oxobutanoate hydroxymethyltransferase.